A 245-amino-acid chain; its full sequence is Probable transcriptional regulatory protein Cbei_4222 (245 aa).

Belongs to the TACO1 family.

It is found in the cytoplasm. The polypeptide is Probable transcriptional regulatory protein Cbei_4222 (Clostridium beijerinckii (strain ATCC 51743 / NCIMB 8052) (Clostridium acetobutylicum)).